The sequence spans 208 residues: Imidazole glycerol phosphate synthase subunit HisH (208 aa).

In terms of domain architecture, Glutamine amidotransferase type-1 spans 1 to 206 (MIVIIDYDTG…KEVIRSCKSS (206 aa)). Cys79 (nucleophile) is an active-site residue. Residues His181 and Glu183 contribute to the active site.

As to quaternary structure, heterodimer of HisH and HisF.

It is found in the cytoplasm. It carries out the reaction 5-[(5-phospho-1-deoxy-D-ribulos-1-ylimino)methylamino]-1-(5-phospho-beta-D-ribosyl)imidazole-4-carboxamide + L-glutamine = D-erythro-1-(imidazol-4-yl)glycerol 3-phosphate + 5-amino-1-(5-phospho-beta-D-ribosyl)imidazole-4-carboxamide + L-glutamate + H(+). It catalyses the reaction L-glutamine + H2O = L-glutamate + NH4(+). Its pathway is amino-acid biosynthesis; L-histidine biosynthesis; L-histidine from 5-phospho-alpha-D-ribose 1-diphosphate: step 5/9. Its function is as follows. IGPS catalyzes the conversion of PRFAR and glutamine to IGP, AICAR and glutamate. The HisH subunit catalyzes the hydrolysis of glutamine to glutamate and ammonia as part of the synthesis of IGP and AICAR. The resulting ammonia molecule is channeled to the active site of HisF. In Listeria welshimeri serovar 6b (strain ATCC 35897 / DSM 20650 / CCUG 15529 / CIP 8149 / NCTC 11857 / SLCC 5334 / V8), this protein is Imidazole glycerol phosphate synthase subunit HisH.